A 259-amino-acid chain; its full sequence is Cysteine protease IpaJ (259 aa).

Catalysis depends on residues Cys64, His206, and Asp218.

The protein resides in the secreted. Its subcellular location is the host cytoplasm. In terms of biological role, virulence factor that eliminates N-myristoyl protein modifications in infected host cells. Acts as a cysteine protease that cleaves the peptide bond between N-myristoylated Gly-2 and Asn-3 of human ARF1, leading to the elimination of the myristoyl group and alteration of protein trafficking in host cell. Could also cleave an array of N-myristoylated host proteins involved in cellular growth, signal transduction, autophagasome maturation and organelle function. This is Cysteine protease IpaJ (ipaJ) from Shigella flexneri.